The chain runs to 418 residues: NADH-quinone oxidoreductase subunit D (418 aa).

It belongs to the complex I 49 kDa subunit family. NDH-1 is composed of 14 different subunits. Subunits NuoB, C, D, E, F, and G constitute the peripheral sector of the complex.

The protein resides in the cell inner membrane. The catalysed reaction is a quinone + NADH + 5 H(+)(in) = a quinol + NAD(+) + 4 H(+)(out). NDH-1 shuttles electrons from NADH, via FMN and iron-sulfur (Fe-S) centers, to quinones in the respiratory chain. The immediate electron acceptor for the enzyme in this species is believed to be ubiquinone. Couples the redox reaction to proton translocation (for every two electrons transferred, four hydrogen ions are translocated across the cytoplasmic membrane), and thus conserves the redox energy in a proton gradient. The chain is NADH-quinone oxidoreductase subunit D from Neisseria meningitidis serogroup A / serotype 4A (strain DSM 15465 / Z2491).